A 139-amino-acid chain; its full sequence is Protein archease (139 aa).

Residues Asp-12, Asp-138, and Ile-139 each contribute to the Ca(2+) site.

Belongs to the archease family.

Functionally, activates the tRNA-splicing ligase complex by facilitating the enzymatic turnover of catalytic subunit RtcB. Acts by promoting the guanylylation of RtcB, a key intermediate step in tRNA ligation. Can also alter the NTP specificity of RtcB such that ATP, dGTP or ITP is used efficiently. The polypeptide is Protein archease (Sulfolobus acidocaldarius (strain ATCC 33909 / DSM 639 / JCM 8929 / NBRC 15157 / NCIMB 11770)).